A 343-amino-acid polypeptide reads, in one-letter code: Protein RecA (343 aa).

ATP is bound at residue 66-73; the sequence is GPESSGKT.

This sequence belongs to the RecA family.

Its subcellular location is the cytoplasm. Functionally, can catalyze the hydrolysis of ATP in the presence of single-stranded DNA, the ATP-dependent uptake of single-stranded DNA by duplex DNA, and the ATP-dependent hybridization of homologous single-stranded DNAs. It interacts with LexA causing its activation and leading to its autocatalytic cleavage. This is Protein RecA from Nitrosomonas europaea (strain ATCC 19718 / CIP 103999 / KCTC 2705 / NBRC 14298).